The sequence spans 129 residues: MAELIQKKLQGEVEKYQQLQKDLSKSMSGRQKLEAQLTENNIVKEELALLDGSNVVFKLLGPVLVKQELGEARATVGKRLDYITAEIKRYESQLRDLEQQSEQQRETLAQLQQEFQRAQAAKAGAPGKA.

The residue at position 2 (A2) is an N-acetylalanine. K21 carries the N6-acetyllysine modification. At K66 the chain carries N6-acetyllysine; alternate. K66 participates in a covalent cross-link: Glycyl lysine isopeptide (Lys-Gly) (interchain with G-Cter in SUMO1); alternate. K66 participates in a covalent cross-link: Glycyl lysine isopeptide (Lys-Gly) (interchain with G-Cter in SUMO2); alternate.

The protein belongs to the prefoldin subunit beta family. As to quaternary structure, heterohexamer of two PFD-alpha type and four PFD-beta type subunits. Component of the PAQosome complex which is responsible for the biogenesis of several protein complexes and which consists of R2TP complex members RUVBL1, RUVBL2, RPAP3 and PIH1D1, URI complex members PFDN2, PFDN6, PDRG1, UXT and URI1 as well as ASDURF, POLR2E and DNAAF10/WDR92.

Binds specifically to cytosolic chaperonin (c-CPN) and transfers target proteins to it. Binds to nascent polypeptide chain and promotes folding in an environment in which there are many competing pathways for nonnative proteins. In Bos taurus (Bovine), this protein is Prefoldin subunit 6 (PFDN6).